The sequence spans 122 residues: Large ribosomal subunit protein uL18 (122 aa).

It belongs to the universal ribosomal protein uL18 family. Part of the 50S ribosomal subunit; part of the 5S rRNA/L5/L18/L25 subcomplex. Contacts the 5S and 23S rRNAs.

Its function is as follows. This is one of the proteins that bind and probably mediate the attachment of the 5S RNA into the large ribosomal subunit, where it forms part of the central protuberance. In Leptospira interrogans serogroup Icterohaemorrhagiae serovar copenhageni (strain Fiocruz L1-130), this protein is Large ribosomal subunit protein uL18.